A 368-amino-acid polypeptide reads, in one-letter code: Probable ubiquitin receptor RAD23a (368 aa).

Residues 1–77 (MKLTVKTLKG…GFLVVMLSKS (77 aa)) enclose the Ubiquitin-like domain. The span at 80–111 (ASSAGPSSTQPTSTTTSTISSTTLAAPSTTQS) shows a compositional bias: low complexity. The segment at 80–136 (ASSAGPSSTQPTSTTTSTISSTTLAAPSTTQSIAVPASNSTPVQEQPTAQSDTYGQA) is disordered. Residues 116 to 136 (ASNSTPVQEQPTAQSDTYGQA) show a composition bias toward polar residues. Positions 142-185 (SGSSIEQMVQQIMEMGGGSWDKETVTRALRAAYNNPERAVDYLY) constitute a UBA 1 domain. The tract at residues 202 to 222 (VGSGRELTAPPPSGGPNSSPL) is disordered. Residues 239–282 (GTLEFLRGNDQFQQLRSMVNSNPQILQPMLQELGKQNPQLLRLI) form the STI1 domain. One can recognise a UBA 2 domain in the interval 320–360 (VTPEEQESIERLEAMGFDRAIVIEAFLSCDRNEELAANYLL).

Belongs to the RAD23 family. As to quaternary structure, interacts with 'Lys-48'-linked polyubiquitin chains. Interacts with RPN10. Widely expressed in the whole plant.

It localises to the nucleus. It is found in the cytoplasm. In terms of biological role, may be involved in nucleotide excision repair. Binds and presumably selects ubiquitin-conjugates for destruction. Prefers multiubiquitin chains rather than single ubiquitins, with a binding affinity for 'Lys-48'-linked ubiquitin chains. Acts as a ubiquitin receptor that associates with the 26S proteasomal docking subunit RPN10 for the indirect recognition of ubiquitinated substrates of ubiquitin/26S proteasome-mediated proteolysis (UPP). Involved in UV tolerance in roots, specifically in dark conditions. This is Probable ubiquitin receptor RAD23a from Arabidopsis thaliana (Mouse-ear cress).